A 451-amino-acid chain; its full sequence is Phosphoglucosamine mutase (451 aa).

Ser103 (phosphoserine intermediate) is an active-site residue. Mg(2+) is bound by residues Ser103, Asp243, Asp245, and Asp247. Phosphoserine is present on Ser103.

The protein belongs to the phosphohexose mutase family. The cofactor is Mg(2+). In terms of processing, activated by phosphorylation.

The catalysed reaction is alpha-D-glucosamine 1-phosphate = D-glucosamine 6-phosphate. In terms of biological role, catalyzes the conversion of glucosamine-6-phosphate to glucosamine-1-phosphate. The sequence is that of Phosphoglucosamine mutase from Lactobacillus gasseri (strain ATCC 33323 / DSM 20243 / BCRC 14619 / CIP 102991 / JCM 1131 / KCTC 3163 / NCIMB 11718 / NCTC 13722 / AM63).